Here is a 118-residue protein sequence, read N- to C-terminus: Small ribosomal subunit protein bS6 (118 aa).

The interval 98-118 is disordered; sequence TAAPAAKVAPVETAPAAEAAE. Over residues 99–118 the composition is skewed to low complexity; it reads AAPAAKVAPVETAPAAEAAE.

The protein belongs to the bacterial ribosomal protein bS6 family.

In terms of biological role, binds together with bS18 to 16S ribosomal RNA. The sequence is that of Small ribosomal subunit protein bS6 from Geobacter metallireducens (strain ATCC 53774 / DSM 7210 / GS-15).